The sequence spans 298 residues: Uricase (298 aa).

Active-site charge relay system residues include Lys-18 and Thr-63. Residues Thr-63, Asp-64, Phe-165, Arg-182, Val-229, Gln-230, and Asn-256 each contribute to the urate site. His-258 serves as the catalytic Charge relay system. The Microbody targeting signal signature appears at 296–298 (ARM).

The protein belongs to the uricase family. In terms of assembly, homotetramer; dimer of dimers.

It is found in the peroxisome. It carries out the reaction urate + O2 + H2O = 5-hydroxyisourate + H2O2. It functions in the pathway purine metabolism; urate degradation; (S)-allantoin from urate: step 1/3. With respect to regulation, competitively inhibited by xanthine. Its function is as follows. Catalyzes the oxidation of uric acid to 5-hydroxyisourate, which is further processed to form (S)-allantoin. The chain is Uricase from Danio rerio (Zebrafish).